The primary structure comprises 345 residues: Nicotinate-nucleotide--dimethylbenzimidazole phosphoribosyltransferase (345 aa).

Glu-312 serves as the catalytic Proton acceptor.

It belongs to the CobT family.

It catalyses the reaction 5,6-dimethylbenzimidazole + nicotinate beta-D-ribonucleotide = alpha-ribazole 5'-phosphate + nicotinate + H(+). Its pathway is nucleoside biosynthesis; alpha-ribazole biosynthesis; alpha-ribazole from 5,6-dimethylbenzimidazole: step 1/2. Catalyzes the synthesis of alpha-ribazole-5'-phosphate from nicotinate mononucleotide (NAMN) and 5,6-dimethylbenzimidazole (DMB). The polypeptide is Nicotinate-nucleotide--dimethylbenzimidazole phosphoribosyltransferase (Bacteroides fragilis (strain ATCC 25285 / DSM 2151 / CCUG 4856 / JCM 11019 / LMG 10263 / NCTC 9343 / Onslow / VPI 2553 / EN-2)).